A 185-amino-acid chain; its full sequence is TATA-box-binding protein 3 (185 aa).

2 consecutive repeat copies span residues 7-84 (IENV…ANTL) and 100-178 (VQNI…KTEF).

It belongs to the TBP family.

In terms of biological role, general factor that plays a role in the activation of archaeal genes transcribed by RNA polymerase. Binds specifically to the TATA box promoter element which lies close to the position of transcription initiation. The chain is TATA-box-binding protein 3 from Methanosarcina mazei (strain ATCC BAA-159 / DSM 3647 / Goe1 / Go1 / JCM 11833 / OCM 88) (Methanosarcina frisia).